We begin with the raw amino-acid sequence, 131 residues long: Global transcriptional regulator Spx (131 aa).

C10 and C13 are joined by a disulfide.

This sequence belongs to the ArsC family. Spx subfamily. Interacts with the C-terminal domain of the alpha subunit of the RNAP.

Its subcellular location is the cytoplasm. Functionally, global transcriptional regulator that plays a key role in stress response and exerts either positive or negative regulation of genes. Acts by interacting with the C-terminal domain of the alpha subunit of the RNA polymerase (RNAP). This interaction can enhance binding of RNAP to the promoter region of target genes and stimulate their transcription, or block interaction of RNAP with activator. The protein is Global transcriptional regulator Spx of Staphylococcus epidermidis (strain ATCC 35984 / DSM 28319 / BCRC 17069 / CCUG 31568 / BM 3577 / RP62A).